A 388-amino-acid chain; its full sequence is Riboflavin biosynthesis protein RibBA (388 aa).

The DHBP synthase stretch occupies residues methionine 1–lysine 186. D-ribulose 5-phosphate contacts are provided by residues arginine 21–glutamate 22, aspartate 26, arginine 125–threonine 129, and glutamate 149. Glutamate 22 contributes to the Mg(2+) binding site. Histidine 128 provides a ligand contact to Mg(2+). A GTP cyclohydrolase II region spans residues arginine 187–serine 388. Arginine 235–glutamate 239 provides a ligand contact to GTP. Residues cysteine 240, cysteine 251, and cysteine 253 each coordinate Zn(2+). Residues glutamine 256, glutamate 277 to arginine 279, and threonine 299 each bind GTP. Residue aspartate 311 is the Proton acceptor; for GTP cyclohydrolase activity of the active site. Arginine 313 functions as the Nucleophile; for GTP cyclohydrolase activity in the catalytic mechanism. Threonine 334 and lysine 339 together coordinate GTP.

In the N-terminal section; belongs to the DHBP synthase family. This sequence in the C-terminal section; belongs to the GTP cyclohydrolase II family. Mg(2+) is required as a cofactor. Requires Mn(2+) as cofactor. Zn(2+) serves as cofactor.

The enzyme catalyses D-ribulose 5-phosphate = (2S)-2-hydroxy-3-oxobutyl phosphate + formate + H(+). The catalysed reaction is GTP + 4 H2O = 2,5-diamino-6-hydroxy-4-(5-phosphoribosylamino)-pyrimidine + formate + 2 phosphate + 3 H(+). It participates in cofactor biosynthesis; riboflavin biosynthesis; 2-hydroxy-3-oxobutyl phosphate from D-ribulose 5-phosphate: step 1/1. It functions in the pathway cofactor biosynthesis; riboflavin biosynthesis; 5-amino-6-(D-ribitylamino)uracil from GTP: step 1/4. In terms of biological role, catalyzes the conversion of D-ribulose 5-phosphate to formate and 3,4-dihydroxy-2-butanone 4-phosphate. Its function is as follows. Catalyzes the conversion of GTP to 2,5-diamino-6-ribosylamino-4(3H)-pyrimidinone 5'-phosphate (DARP), formate and pyrophosphate. The protein is Riboflavin biosynthesis protein RibBA of Thermotoga maritima (strain ATCC 43589 / DSM 3109 / JCM 10099 / NBRC 100826 / MSB8).